Consider the following 178-residue polypeptide: ATP synthase subunit delta (178 aa).

This sequence belongs to the ATPase delta chain family. As to quaternary structure, F-type ATPases have 2 components, F(1) - the catalytic core - and F(0) - the membrane proton channel. F(1) has five subunits: alpha(3), beta(3), gamma(1), delta(1), epsilon(1). F(0) has three main subunits: a(1), b(2) and c(10-14). The alpha and beta chains form an alternating ring which encloses part of the gamma chain. F(1) is attached to F(0) by a central stalk formed by the gamma and epsilon chains, while a peripheral stalk is formed by the delta and b chains.

The protein localises to the cell inner membrane. F(1)F(0) ATP synthase produces ATP from ADP in the presence of a proton or sodium gradient. F-type ATPases consist of two structural domains, F(1) containing the extramembraneous catalytic core and F(0) containing the membrane proton channel, linked together by a central stalk and a peripheral stalk. During catalysis, ATP synthesis in the catalytic domain of F(1) is coupled via a rotary mechanism of the central stalk subunits to proton translocation. In terms of biological role, this protein is part of the stalk that links CF(0) to CF(1). It either transmits conformational changes from CF(0) to CF(1) or is implicated in proton conduction. The sequence is that of ATP synthase subunit delta from Pseudomonas fluorescens (strain Pf0-1).